A 446-amino-acid polypeptide reads, in one-letter code: N-succinylarginine dihydrolase (446 aa).

Residues 19–28 (AGLSFGNVAS), Asn-110, and 137–138 (HR) each bind substrate. The active site involves Glu-174. Arg-213 lines the substrate pocket. Residue His-249 is part of the active site. Residues Asp-251 and Asn-364 each contribute to the substrate site. The active-site Nucleophile is the Cys-370.

Belongs to the succinylarginine dihydrolase family. As to quaternary structure, homodimer.

The catalysed reaction is N(2)-succinyl-L-arginine + 2 H2O + 2 H(+) = N(2)-succinyl-L-ornithine + 2 NH4(+) + CO2. It functions in the pathway amino-acid degradation; L-arginine degradation via AST pathway; L-glutamate and succinate from L-arginine: step 2/5. Catalyzes the hydrolysis of N(2)-succinylarginine into N(2)-succinylornithine, ammonia and CO(2). The chain is N-succinylarginine dihydrolase from Burkholderia multivorans (strain ATCC 17616 / 249).